The primary structure comprises 383 residues: NifS-like protein (383 aa).

Pyridoxal 5'-phosphate-binding positions include 58–59 (SE) and 184–186 (SLN).

This sequence belongs to the class-V pyridoxal-phosphate-dependent aminotransferase family. NifS/IscS subfamily. It depends on pyridoxal 5'-phosphate as a cofactor.

It is found in the virion. In African swine fever virus (isolate Pig/Kenya/KEN-50/1950) (ASFV), this protein is NifS-like protein.